We begin with the raw amino-acid sequence, 304 residues long: Oxygen-dependent coproporphyrinogen-III oxidase (304 aa).

Serine 93 lines the substrate pocket. 2 residues coordinate a divalent metal cation: histidine 97 and histidine 107. Catalysis depends on histidine 107, which acts as the Proton donor. Residue 109-111 participates in substrate binding; the sequence is NVR. Positions 146 and 176 each coordinate a divalent metal cation. An important for dimerization region spans residues 241 to 276; the sequence is YVEFNLVYDRGTLFGLQSGGRTESILMSLPPQVRWA. Residue 259–261 coordinates substrate; sequence GGR.

Belongs to the aerobic coproporphyrinogen-III oxidase family. In terms of assembly, homodimer. Requires a divalent metal cation as cofactor.

It localises to the cytoplasm. The catalysed reaction is coproporphyrinogen III + O2 + 2 H(+) = protoporphyrinogen IX + 2 CO2 + 2 H2O. The protein operates within porphyrin-containing compound metabolism; protoporphyrin-IX biosynthesis; protoporphyrinogen-IX from coproporphyrinogen-III (O2 route): step 1/1. In terms of biological role, involved in the heme biosynthesis. Catalyzes the aerobic oxidative decarboxylation of propionate groups of rings A and B of coproporphyrinogen-III to yield the vinyl groups in protoporphyrinogen-IX. This chain is Oxygen-dependent coproporphyrinogen-III oxidase, found in Pseudomonas fluorescens (strain Pf0-1).